We begin with the raw amino-acid sequence, 377 residues long: Histidinol-phosphate aminotransferase (377 aa).

Lys-232 is subject to N6-(pyridoxal phosphate)lysine.

Belongs to the class-II pyridoxal-phosphate-dependent aminotransferase family. Histidinol-phosphate aminotransferase subfamily. As to quaternary structure, homodimer. The cofactor is pyridoxal 5'-phosphate.

It carries out the reaction L-histidinol phosphate + 2-oxoglutarate = 3-(imidazol-4-yl)-2-oxopropyl phosphate + L-glutamate. The protein operates within amino-acid biosynthesis; L-histidine biosynthesis; L-histidine from 5-phospho-alpha-D-ribose 1-diphosphate: step 7/9. This is Histidinol-phosphate aminotransferase from Mycobacterium sp. (strain KMS).